The chain runs to 932 residues: MDYNKTLNLPKTDFPMKANLPVREPEILKKWEEMDIYRRVLEKNKGKEKYILHDGPPYANGDIHIGTAMNKVLKDIVVKYKTMRGYDSPYVPGWDTHGLPIEQQVIKILGVKRHEMNPVEFRKVCKDFAFSQIERQRQQFKRLGVRGDWEKPYLTLDPEYEAKQIEVFGEMAKRGYIYKGLKPVYWCPSCETALAEAEIEYFDETSDSIYVKFRVRDDLGKFKGIVEDLSNVYFVIWTTTTWTIPANLAIALNPEFDYSLTKFGDEVYIIAKDMIEEVRKETGLGDYEILATFKGKELEGMKAVHPIYNRDSIVVLGEHVTLDAGTGCVHTAPGHGEEDFLVGQEYGLEALNPIDEKGYFTDKAPGYEGLYYAEANKVIKEDLRKANALLAEKKITHSYPHCWRCKSPILFRATEQWFASVEGFREEALKAIKEVNWYPAWGEERITNMVRDRKDWCISRQRVWGVPIPIFYCENCGKPLINDETINAVKELFRQKGSDAWFEMSAEEILPEGIKCECGSTKFRKETDIMDVWFDSGSSHAAVLETHPDLKWPAELYLEGSDQHRGWFQSSLLTAVATRGKAPYKNVLTHGFVVDGEGRKMSKSLGNVVDPAEVIQEYGADVLRLWVVSADYTADMRTSPEILKQIAEVYRKIRNTARFLLGNLYDFDPDKDMLPYEELLEIDKWALYRLNRLVKQLTESFDKYEFYDFFHPVHNFCVVDMSSLYLDILKDRLYTYPAKSKERKAAQTTLYIILDTLVKLMAPVLAFTSEEIWWHMKHDRNNNFESVQLADWPQVKEEYDNPYIIEKWEKLFDIRKDISKALEIARSEKKIGHSLDAQVDIYPSSELYEFFKGFEDLQYVFIVSKVVLHDPQEVAPENAYVSEDYDLKITVTRAPGEKCERCWMYSETVGTIKEHPTICARCASHIEEQLKV.

The 'HIGH' region signature appears at 57–67 (PYANGDIHIGT). Position 559 (E559) interacts with L-isoleucyl-5'-AMP. The 'KMSKS' region signature appears at 600 to 604 (KMSKS). K603 lines the ATP pocket. C899, C902, C919, and C922 together coordinate Zn(2+).

It belongs to the class-I aminoacyl-tRNA synthetase family. IleS type 1 subfamily. Monomer. Requires Zn(2+) as cofactor.

The protein resides in the cytoplasm. The enzyme catalyses tRNA(Ile) + L-isoleucine + ATP = L-isoleucyl-tRNA(Ile) + AMP + diphosphate. Its function is as follows. Catalyzes the attachment of isoleucine to tRNA(Ile). As IleRS can inadvertently accommodate and process structurally similar amino acids such as valine, to avoid such errors it has two additional distinct tRNA(Ile)-dependent editing activities. One activity is designated as 'pretransfer' editing and involves the hydrolysis of activated Val-AMP. The other activity is designated 'posttransfer' editing and involves deacylation of mischarged Val-tRNA(Ile). The chain is Isoleucine--tRNA ligase from Caldanaerobacter subterraneus subsp. tengcongensis (strain DSM 15242 / JCM 11007 / NBRC 100824 / MB4) (Thermoanaerobacter tengcongensis).